Reading from the N-terminus, the 37-residue chain is Large ribosomal subunit protein bL36 (37 aa).

It belongs to the bacterial ribosomal protein bL36 family.

The sequence is that of Large ribosomal subunit protein bL36 from Geobacter metallireducens (strain ATCC 53774 / DSM 7210 / GS-15).